We begin with the raw amino-acid sequence, 311 residues long: MNKGGAQQKGHSSKQAENIVLVGRTGNGKSATGNSLIGKKVFASKAHASGVTMKCQTHGVVTKDGHKINVIDTPGLFDLSVSAEYISKEIVRCLTLAEGGIHAVLLVLSARTRITQEEENTLRTLQALFGSQILDYVVVVFTGGDVLEECKETLEDYLGRDCPTFIKEVMRMSSNRKVVIDNKTHDEGKKAEQVHKLLSLVDDIRRSKCGEAYTDDTYHMIKEESEKLRKHHEELESKNYSEECAAEMKNQSLILYKENLKQMSEQLEKKLKDAAEAQEKALSKMTQENNELNLALKIHIPLPPITPCNIL.

The AIG1-type G domain maps to Lys14–Lys222. Residues Gly23–Ser30 are G1. GTP-binding positions include Gly23–Ala31 and Ser44. The tract at residues Gly50–Lys54 is G2. The G3 stretch occupies residues Asp72–Gly75. Residues Thr142–Asp145 form a G4 region. Residues Asp181–Lys183 form a G5 region. Asn182 provides a ligand contact to GTP. Residues Tyr218–Ala295 are a coiled coil.

Belongs to the TRAFAC class TrmE-Era-EngA-EngB-Septin-like GTPase superfamily. AIG1/Toc34/Toc159-like paraseptin GTPase family. IAN subfamily. Ubiquitous.

This is Immune-associated nucleotide-binding protein 7 from Arabidopsis thaliana (Mouse-ear cress).